The primary structure comprises 209 residues: Protein GET1 (209 aa).

At 1-3 (MSL) the chain is on the lumenal side. A helical transmembrane segment spans residues 4 to 23 (LLVIFLLELVVQLVNTIGAK). Residues 24–110 (TINNLLWRFY…SFSRKLTIYR (87 aa)) lie on the Cytoplasmic side of the membrane. Residues 74-101 (WARLQRKHDKLMDELEKKKSQLDAHRTS) are a coiled coil. Residues 111–131 (WILTRGMQWFLCFWFSSQPMF) traverse the membrane as a helical segment. The Lumenal portion of the chain corresponds to 132–155 (WLPYGWFPYWVEWLVSFPNAPMGS). A helical transmembrane segment spans residues 156–172 (VSIVVWQSACSGVLALV). At 173 to 209 (IEAVMAVVRYTGGTGMQKQRQPVPAAGGAPGTSKKDL) the chain is on the cytoplasmic side. The segment at 188–209 (MQKQRQPVPAAGGAPGTSKKDL) is disordered.

This sequence belongs to the WRB/GET1 family. In terms of assembly, interacts with GET3.

The protein localises to the endoplasmic reticulum membrane. Required for the post-translational delivery of tail-anchored (TA) proteins to the endoplasmic reticulum. Acts as a membrane receptor for soluble GET3, which recognizes and selectively binds the transmembrane domain of TA proteins in the cytosol. In Chaetomium thermophilum (strain DSM 1495 / CBS 144.50 / IMI 039719) (Thermochaetoides thermophila), this protein is Protein GET1.